Consider the following 201-residue polypeptide: Ciliary microtubule inner protein 2C (201 aa).

This sequence belongs to the CIMIP2 family. In terms of assembly, microtubule inner protein component of sperm flagellar doublet microtubules.

It is found in the cytoplasm. It localises to the cytoskeleton. The protein localises to the cilium axoneme. The protein resides in the flagellum axoneme. In terms of biological role, microtubule inner protein (MIP) part of the dynein-decorated doublet microtubules (DMTs) in cilia axoneme, which is required for motile cilia beating. Binds to the intra-tubulin interfaces. The sequence is that of Ciliary microtubule inner protein 2C (CIMIP2C) from Bos taurus (Bovine).